Consider the following 471-residue polypeptide: Apyrase 1 (471 aa).

The Cytoplasmic portion of the chain corresponds to 1–21; the sequence is MTAKRAIGRHESLADKVHRHR. A helical; Signal-anchor for type II membrane protein transmembrane segment spans residues 22 to 42; it reads GLLLVISIPIVLIALVLLLMP. Over 43–471 the chain is Lumenal; sequence GTSTSVSVIE…GSAIEAVSSP (429 aa). 72-82 provides a ligand contact to ATP; the sequence is VIFDAGSSGSR. The active-site Proton acceptor is E194. 218–228 is a binding site for ATP; it reads GVVDLGGGSVQ. N333 is a glycosylation site (N-linked (GlcNAc...) asparagine).

This sequence belongs to the GDA1/CD39 NTPase family. Requires Ca(2+) as cofactor. As to expression, expressed in roots, root hairs, root cap, leaves, stems, trichomes, phloem throughout the plant, guard cells, filaments of young stamens, stipules, papillae of stigmas, pollen, pollen tubes and the abscission zone of siliques.

The protein localises to the golgi apparatus membrane. It is found in the membrane. It carries out the reaction a ribonucleoside 5'-triphosphate + 2 H2O = a ribonucleoside 5'-phosphate + 2 phosphate + 2 H(+). Functionally, catalyzes the hydrolysis of phosphoanhydride bonds of nucleoside tri- and di-phosphates. Substrate preference is ATP &gt; ADP. Functions with APY2 to reduce extracellular ATP level which is essential for pollen germination and normal plant development. Plays a role in the regulation of stomatal function by modulating extracellular ATP levels in guard cells. The protein is Apyrase 1 (APY1) of Arabidopsis thaliana (Mouse-ear cress).